The primary structure comprises 213 residues: Probable GTP-binding protein EngB (213 aa).

Residues 30 to 204 (SVQSIAFMGR…REFILETLGI (175 aa)) form the EngB-type G domain. Residues 38-45 (GRSNSGKS), 65-69 (GKTKL), 83-86 (DLPG), 150-153 (TKID), and 183-185 (ISA) contribute to the GTP site. Ser-45 and Thr-67 together coordinate Mg(2+).

It belongs to the TRAFAC class TrmE-Era-EngA-EngB-Septin-like GTPase superfamily. EngB GTPase family. The cofactor is Mg(2+).

In terms of biological role, necessary for normal cell division and for the maintenance of normal septation. The polypeptide is Probable GTP-binding protein EngB (Leptospira biflexa serovar Patoc (strain Patoc 1 / Ames)).